Here is a 158-residue protein sequence, read N- to C-terminus: Endoribonuclease YbeY (158 aa).

Residues H119, H123, and H129 each coordinate Zn(2+).

It belongs to the endoribonuclease YbeY family. It depends on Zn(2+) as a cofactor.

Its subcellular location is the cytoplasm. In terms of biological role, single strand-specific metallo-endoribonuclease involved in late-stage 70S ribosome quality control and in maturation of the 3' terminus of the 16S rRNA. The protein is Endoribonuclease YbeY of Shewanella woodyi (strain ATCC 51908 / MS32).